The primary structure comprises 250 residues: 4-hydroxy-tetrahydrodipicolinate reductase (250 aa).

NAD(+)-binding positions include glycine 10–isoleucine 15, glycine 78–threonine 80, and alanine 105–phenylalanine 108. The active-site Proton donor/acceptor is the histidine 135. Histidine 136 is a binding site for (S)-2,3,4,5-tetrahydrodipicolinate. Lysine 139 acts as the Proton donor in catalysis. Glycine 145–threonine 146 contacts (S)-2,3,4,5-tetrahydrodipicolinate.

Belongs to the DapB family.

Its subcellular location is the cytoplasm. The catalysed reaction is (S)-2,3,4,5-tetrahydrodipicolinate + NAD(+) + H2O = (2S,4S)-4-hydroxy-2,3,4,5-tetrahydrodipicolinate + NADH + H(+). The enzyme catalyses (S)-2,3,4,5-tetrahydrodipicolinate + NADP(+) + H2O = (2S,4S)-4-hydroxy-2,3,4,5-tetrahydrodipicolinate + NADPH + H(+). It participates in amino-acid biosynthesis; L-lysine biosynthesis via DAP pathway; (S)-tetrahydrodipicolinate from L-aspartate: step 4/4. In terms of biological role, catalyzes the conversion of 4-hydroxy-tetrahydrodipicolinate (HTPA) to tetrahydrodipicolinate. In Streptomyces avermitilis (strain ATCC 31267 / DSM 46492 / JCM 5070 / NBRC 14893 / NCIMB 12804 / NRRL 8165 / MA-4680), this protein is 4-hydroxy-tetrahydrodipicolinate reductase.